The following is a 461-amino-acid chain: Cyclic 2,3-diphosphoglycerate synthetase (461 aa).

The protein belongs to the cyclic 2,3-diphosphoglycerate synthetase family.

Its subcellular location is the cytoplasm. The catalysed reaction is (2R)-2,3-bisphosphoglycerate + ATP + H(+) = cyclic (2R)-2,3-bisphosphoglycerate + ADP + phosphate. In terms of biological role, catalyzes the formation of cyclic 2,3-diphosphoglycerate (cDPG) by formation of an intramolecular phosphoanhydride bond at the expense of ATP. The protein is Cyclic 2,3-diphosphoglycerate synthetase of Methanosphaera stadtmanae (strain ATCC 43021 / DSM 3091 / JCM 11832 / MCB-3).